Reading from the N-terminus, the 305-residue chain is UDP-3-O-acyl-N-acetylglucosamine deacetylase (305 aa).

Positions 79, 238, and 242 each coordinate Zn(2+). His-265 acts as the Proton donor in catalysis.

It belongs to the LpxC family. It depends on Zn(2+) as a cofactor.

The catalysed reaction is a UDP-3-O-[(3R)-3-hydroxyacyl]-N-acetyl-alpha-D-glucosamine + H2O = a UDP-3-O-[(3R)-3-hydroxyacyl]-alpha-D-glucosamine + acetate. The protein operates within glycolipid biosynthesis; lipid IV(A) biosynthesis; lipid IV(A) from (3R)-3-hydroxytetradecanoyl-[acyl-carrier-protein] and UDP-N-acetyl-alpha-D-glucosamine: step 2/6. Catalyzes the hydrolysis of UDP-3-O-myristoyl-N-acetylglucosamine to form UDP-3-O-myristoylglucosamine and acetate, the committed step in lipid A biosynthesis. This chain is UDP-3-O-acyl-N-acetylglucosamine deacetylase, found in Cronobacter sakazakii (strain ATCC BAA-894) (Enterobacter sakazakii).